A 203-amino-acid chain; its full sequence is Outer-membrane lipoprotein LolB (203 aa).

An N-terminal signal peptide occupies residues 1–18; the sequence is MTLRSFLILLLSSIVLAG. The N-palmitoyl cysteine moiety is linked to residue Cys-19. A lipid anchor (S-diacylglycerol cysteine) is attached at Cys-19.

Belongs to the LolB family. Monomer.

It localises to the cell outer membrane. Plays a critical role in the incorporation of lipoproteins in the outer membrane after they are released by the LolA protein. This chain is Outer-membrane lipoprotein LolB, found in Vibrio campbellii (strain ATCC BAA-1116).